Reading from the N-terminus, the 306-residue chain is Serine/threonine-protein kinase csk1 (306 aa).

Residues 11–306 form the Protein kinase domain; it reads LTDIRHLTDG…KVSARLSQYA (296 aa). ATP contacts are provided by residues 17 to 25 and Lys-40; that span reads LTDGTISEV. Residue Asp-129 is the Proton acceptor of the active site.

Belongs to the protein kinase superfamily. CMGC Ser/Thr protein kinase family. CDC2/CDKX subfamily.

The enzyme catalyses L-seryl-[protein] + ATP = O-phospho-L-seryl-[protein] + ADP + H(+). It catalyses the reaction L-threonyl-[protein] + ATP = O-phospho-L-threonyl-[protein] + ADP + H(+). Acts as a CAK-activating kinase that specifically activates crk1 of the crk1-mcs2 CAK complex. This is Serine/threonine-protein kinase csk1 (csk1) from Schizosaccharomyces pombe (strain 972 / ATCC 24843) (Fission yeast).